Here is a 519-residue protein sequence, read N- to C-terminus: Cytochrome P450 monooxygenase AtmP (519 aa).

Residues 21–41 (SMLLVVTLVILFLWFIIPSPV) traverse the membrane as a helical segment. Cys457 provides a ligand contact to heme.

Belongs to the cytochrome P450 family. The cofactor is heme.

The protein localises to the membrane. The protein operates within secondary metabolite biosynthesis. Functionally, cytochrome P450 monooxygenase; part of the ATM2 gene cluster that mediates the biosynthesis of aflatrem, a tremorgenic mycotoxin with acute neurotoxic effects. Synthesis of geranylgeranyl diphosphate (GGPP) by AtmG (a GGPP synthase) precedes condensation of GGPP with indole 3-glycerol phosphate, followed by epoxidation and cyclization by AtmM (a FAD-dependent monooxygenase) and AtmC (a prenyltransferase) to produce paspaline. AtmB is also essential for paspaline production, but its exact role has not been identified yet. AtmP, a cytochrome P450 monooxygenase, subsequently converts paspaline to 13-desoxypaxilline via PC-M6 by removal of the C-30 methyl group and oxidation at C-10. AtmQ, a cytochrome P450 monooxygenase, then catalyzes the oxidation of 13-desoxypaxilline, first at C-7 to produce paspalicine and then at C-13 to form paspalinine. Finally, AtmD prenylates paspalinine to form aflatrem. This is Cytochrome P450 monooxygenase AtmP from Aspergillus flavus.